A 382-amino-acid polypeptide reads, in one-letter code: 1-deoxy-D-xylulose 5-phosphate reductoisomerase (382 aa).

Thr10, Gly11, Ser12, Ile13, Asn38, and Asn120 together coordinate NADPH. Lys121 serves as a coordination point for 1-deoxy-D-xylulose 5-phosphate. Glu122 serves as a coordination point for NADPH. Residue Asp146 coordinates Mn(2+). 4 residues coordinate 1-deoxy-D-xylulose 5-phosphate: Ser147, Glu148, Ser172, and His195. Glu148 is a Mn(2+) binding site. Gly201 is a binding site for NADPH. Ser208, Asn213, Lys214, and Glu217 together coordinate 1-deoxy-D-xylulose 5-phosphate. Glu217 is a binding site for Mn(2+).

This sequence belongs to the DXR family. The cofactor is Mg(2+). Mn(2+) is required as a cofactor.

The catalysed reaction is 2-C-methyl-D-erythritol 4-phosphate + NADP(+) = 1-deoxy-D-xylulose 5-phosphate + NADPH + H(+). It functions in the pathway isoprenoid biosynthesis; isopentenyl diphosphate biosynthesis via DXP pathway; isopentenyl diphosphate from 1-deoxy-D-xylulose 5-phosphate: step 1/6. In terms of biological role, catalyzes the NADPH-dependent rearrangement and reduction of 1-deoxy-D-xylulose-5-phosphate (DXP) to 2-C-methyl-D-erythritol 4-phosphate (MEP). This Caldanaerobacter subterraneus subsp. tengcongensis (strain DSM 15242 / JCM 11007 / NBRC 100824 / MB4) (Thermoanaerobacter tengcongensis) protein is 1-deoxy-D-xylulose 5-phosphate reductoisomerase.